Reading from the N-terminus, the 88-residue chain is Small ribosomal subunit protein bS20 (88 aa).

This sequence belongs to the bacterial ribosomal protein bS20 family.

Functionally, binds directly to 16S ribosomal RNA. This chain is Small ribosomal subunit protein bS20, found in Methylorubrum extorquens (strain CM4 / NCIMB 13688) (Methylobacterium extorquens).